The chain runs to 303 residues: MESALPSIFTLVIIAEFIIGNLSNGFIVLINCIDWVSKRELSSVDKLLIILAISRIGLIWEILVSWFLALHSLAIFVSGTGLRIMIFSWIVSNHFNLWLATILSIFYLLKIASFSSPAFLYLKRRVNKVILMILLGTLVFLFLNLIQINMLIKDWLDRYERNTTWNFSMSDFETFSVSVRFTMTMFSLTPFTVAFISFLLLVFSLQKHLQKMQLNYKGHRDPRTKVHTNALKIVISFLLFYASFFLSILISWISELYQNTVIYMLCETIGAFYPSSHSFLLILGNAKLRQAFLLVAAKVWAKR.

Residues 1–7 (MESALPS) are Extracellular-facing. A helical membrane pass occupies residues 8 to 28 (IFTLVIIAEFIIGNLSNGFIV). The Cytoplasmic segment spans residues 29–55 (LINCIDWVSKRELSSVDKLLIILAISR). A helical membrane pass occupies residues 56–76 (IGLIWEILVSWFLALHSLAIF). The Extracellular segment spans residues 77-85 (VSGTGLRIM). Residues 86 to 106 (IFSWIVSNHFNLWLATILSIF) form a helical membrane-spanning segment. Topologically, residues 107–128 (YLLKIASFSSPAFLYLKRRVNK) are cytoplasmic. Residues 129-149 (VILMILLGTLVFLFLNLIQIN) form a helical membrane-spanning segment. At 150-184 (MLIKDWLDRYERNTTWNFSMSDFETFSVSVRFTMT) the chain is on the extracellular side. N-linked (GlcNAc...) asparagine glycosylation is found at asparagine 162 and asparagine 166. The chain crosses the membrane as a helical span at residues 185–205 (MFSLTPFTVAFISFLLLVFSL). At 206–232 (QKHLQKMQLNYKGHRDPRTKVHTNALK) the chain is on the cytoplasmic side. The chain crosses the membrane as a helical span at residues 233 to 253 (IVISFLLFYASFFLSILISWI). The Extracellular segment spans residues 254 to 261 (SELYQNTV). A helical membrane pass occupies residues 262–282 (IYMLCETIGAFYPSSHSFLLI). Topologically, residues 283-303 (LGNAKLRQAFLLVAAKVWAKR) are cytoplasmic.

The protein belongs to the G-protein coupled receptor T2R family.

It localises to the membrane. Its function is as follows. Receptor that may play a role in the perception of bitterness and is gustducin-linked. May play a role in sensing the chemical composition of the gastrointestinal content. The activity of this receptor may stimulate alpha gustducin, mediate PLC-beta-2 activation and lead to the gating of TRPM5. The polypeptide is Taste receptor type 2 member 13 (TAS2R13) (Pan paniscus (Pygmy chimpanzee)).